We begin with the raw amino-acid sequence, 212 residues long: RING-H2 finger protein ATL68 (212 aa).

Residues 24–44 form a helical membrane-spanning segment; that stretch reads LGLGYSIAIALGFLVLISTII. Residues 136–178 form an RING-type; atypical zinc finger; that stretch reads CSICLCEYMEEEMLRMMPECKHYFHVYCLDAWLKLNGSCPVCR. Residues 182–212 are disordered; it reads LPTPQSTPQSTPLSEVVPLSQYAADRRRSRR. The span at 185–195 shows a compositional bias: low complexity; the sequence is PQSTPQSTPLS.

Belongs to the RING-type zinc finger family. ATL subfamily.

The protein resides in the membrane. It carries out the reaction S-ubiquitinyl-[E2 ubiquitin-conjugating enzyme]-L-cysteine + [acceptor protein]-L-lysine = [E2 ubiquitin-conjugating enzyme]-L-cysteine + N(6)-ubiquitinyl-[acceptor protein]-L-lysine.. Its pathway is protein modification; protein ubiquitination. The sequence is that of RING-H2 finger protein ATL68 (ATL68) from Arabidopsis thaliana (Mouse-ear cress).